A 644-amino-acid chain; its full sequence is Protein ETHYLENE-INSENSITIVE 3-like 1b (644 aa).

Disordered stretches follow at residues 47-75 and 97-131; these read QCVMGEGDLVDPPPESFPDAGEDDSDDDV and ELQLSRGKDPAGGVVGDPSKPRQSQEQARRKKMSR. Positions 66 to 75 are enriched in acidic residues; sequence AGEDDSDDDV.

Belongs to the EIN3 family. As to expression, highly expressed in roots. Expressed at low levels in leaves and panicles.

The protein localises to the nucleus. Functionally, transcription factor acting as a positive regulator in the ethylene response pathway. Involved in wound signaling by binding specifically to the DNA sequence 5'-ATGTACCT-3' found in the promoter of some wound-inducible genes. Binds directly to the DNA sequence 5'-TGTTACAAATACC-3' in the promoter of the GA20OX2 gene to activate its expression at the transcriptional level during ethylene signaling. This chain is Protein ETHYLENE-INSENSITIVE 3-like 1b, found in Oryza sativa subsp. japonica (Rice).